Consider the following 75-residue polypeptide: uncharacterized protein (75 aa).

Residues 1–75 (MIKIYSTPTC…KAEIDKLIEK (75 aa)) enclose the Glutaredoxin domain. A disulfide bridge connects residues Cys10 and Cys13.

Belongs to the glutaredoxin family.

This is an uncharacterized protein from Clostridium pasteurianum.